A 246-amino-acid chain; its full sequence is Uridylate kinase (246 aa).

20-23 (KISG) contacts ATP. Residues 28-33 (GDQGYG) form an involved in allosteric activation by GTP region. Residue Gly-62 participates in UMP binding. The ATP site is built by Gly-63 and Arg-67. Residues Asp-82 and 143-150 (TGNPYFTT) each bind UMP. Thr-170, Tyr-176, and Asp-179 together coordinate ATP.

Belongs to the UMP kinase family. As to quaternary structure, homohexamer.

It localises to the cytoplasm. It carries out the reaction UMP + ATP = UDP + ADP. It functions in the pathway pyrimidine metabolism; CTP biosynthesis via de novo pathway; UDP from UMP (UMPK route): step 1/1. With respect to regulation, allosterically activated by GTP. Inhibited by UTP. Catalyzes the reversible phosphorylation of UMP to UDP. The polypeptide is Uridylate kinase (Cereibacter sphaeroides (strain ATCC 17029 / ATH 2.4.9) (Rhodobacter sphaeroides)).